A 275-amino-acid chain; its full sequence is NH(3)-dependent NAD(+) synthetase (275 aa).

46 to 53 provides a ligand contact to ATP; sequence GISGGQDS. Asp52 contacts Mg(2+). Arg140 serves as a coordination point for deamido-NAD(+). Thr160 is a binding site for ATP. Glu165 is a Mg(2+) binding site. Deamido-NAD(+) contacts are provided by Lys173 and Asp180. The ATP site is built by Lys189 and Thr211. Position 260–261 (260–261) interacts with deamido-NAD(+); that stretch reads HK.

The protein belongs to the NAD synthetase family. Homodimer.

It carries out the reaction deamido-NAD(+) + NH4(+) + ATP = AMP + diphosphate + NAD(+) + H(+). It functions in the pathway cofactor biosynthesis; NAD(+) biosynthesis; NAD(+) from deamido-NAD(+) (ammonia route): step 1/1. In terms of biological role, catalyzes the ATP-dependent amidation of deamido-NAD to form NAD. Uses ammonia as a nitrogen source. This chain is NH(3)-dependent NAD(+) synthetase, found in Escherichia coli O7:K1 (strain IAI39 / ExPEC).